We begin with the raw amino-acid sequence, 130 residues long: Small ribosomal subunit protein uS11c (130 aa).

The protein belongs to the universal ribosomal protein uS11 family. Part of the 30S ribosomal subunit.

It localises to the plastid. Its subcellular location is the chloroplast. This chain is Small ribosomal subunit protein uS11c, found in Pinus koraiensis (Korean pine).